We begin with the raw amino-acid sequence, 601 residues long: Glutathione-regulated potassium-efflux system protein KefB (601 aa).

The next 13 helical transmembrane spans lie at 4–24 (SDLL…VPLA), 29–49 (IGAV…GLGF), 55–75 (EILH…GLEL), 87–107 (IFGV…GLLM), 115–135 (AAVV…LQLM), 152–172 (VLLF…LLAG), 177–197 (HVNW…LIGG), 207–227 (FIAS…LVLG), 230–250 (LFME…GVLL), 268–288 (GLLL…GVLY), 291–311 (LLWV…VLYL), 326–346 (FAGV…LPAS), and 356–376 (ALLL…MKGI). The RCK N-terminal domain occupies 400-519 (KPQVIIVGFG…AGVTQFSRET (120 aa)).

Belongs to the monovalent cation:proton antiporter 2 (CPA2) transporter (TC 2.A.37) family. KefB subfamily. Interacts with the regulatory subunit KefG.

The protein resides in the cell inner membrane. In terms of biological role, pore-forming subunit of a potassium efflux system that confers protection against electrophiles. Catalyzes K(+)/H(+) antiport. The chain is Glutathione-regulated potassium-efflux system protein KefB from Klebsiella pneumoniae (strain 342).